We begin with the raw amino-acid sequence, 294 residues long: Acetyl-coenzyme A carboxylase carboxyl transferase subunit beta (294 aa).

The CoA carboxyltransferase N-terminal domain occupies 25-294 (IWTKCDNCGQ…PKVDYRHCVE (270 aa)). Zn(2+) is bound by residues Cys-29, Cys-32, Cys-48, and Cys-51. Residues 29 to 51 (CDNCGQLLYKKELERNLEVCPKC) form a C4-type zinc finger.

This sequence belongs to the AccD/PCCB family. In terms of assembly, acetyl-CoA carboxylase is a heterohexamer composed of biotin carboxyl carrier protein (AccB), biotin carboxylase (AccC) and two subunits each of ACCase subunit alpha (AccA) and ACCase subunit beta (AccD). Zn(2+) serves as cofactor.

It is found in the cytoplasm. It carries out the reaction N(6)-carboxybiotinyl-L-lysyl-[protein] + acetyl-CoA = N(6)-biotinyl-L-lysyl-[protein] + malonyl-CoA. Its pathway is lipid metabolism; malonyl-CoA biosynthesis; malonyl-CoA from acetyl-CoA: step 1/1. In terms of biological role, component of the acetyl coenzyme A carboxylase (ACC) complex. Biotin carboxylase (BC) catalyzes the carboxylation of biotin on its carrier protein (BCCP) and then the CO(2) group is transferred by the transcarboxylase to acetyl-CoA to form malonyl-CoA. The protein is Acetyl-coenzyme A carboxylase carboxyl transferase subunit beta of Blochmanniella pennsylvanica (strain BPEN).